The following is a 274-amino-acid chain: NADPH-dependent 7-cyano-7-deazaguanine reductase (274 aa).

80-82 (VES) lines the substrate pocket. 82–83 (SK) contacts NADPH. Cys-181 functions as the Thioimide intermediate in the catalytic mechanism. Catalysis depends on Asp-188, which acts as the Proton donor. 220–221 (HE) contributes to the substrate binding site. 249–250 (RG) contributes to the NADPH binding site.

This sequence belongs to the GTP cyclohydrolase I family. QueF type 2 subfamily. In terms of assembly, homodimer.

It is found in the cytoplasm. The catalysed reaction is 7-aminomethyl-7-carbaguanine + 2 NADP(+) = 7-cyano-7-deazaguanine + 2 NADPH + 3 H(+). The protein operates within tRNA modification; tRNA-queuosine biosynthesis. Catalyzes the NADPH-dependent reduction of 7-cyano-7-deazaguanine (preQ0) to 7-aminomethyl-7-deazaguanine (preQ1). The sequence is that of NADPH-dependent 7-cyano-7-deazaguanine reductase from Paraburkholderia xenovorans (strain LB400).